The primary structure comprises 205 residues: Recombination protein RecR (205 aa).

The C4-type zinc-finger motif lies at 60-75; that stretch reads CKVCHNISDTETCQIC. Residues 83 to 178 form the Toprim domain; the sequence is STVCVVENIR…KLSVIARGIS (96 aa).

It belongs to the RecR family.

In terms of biological role, may play a role in DNA repair. It seems to be involved in an RecBC-independent recombinational process of DNA repair. It may act with RecF and RecO. This chain is Recombination protein RecR, found in Bacteroides thetaiotaomicron (strain ATCC 29148 / DSM 2079 / JCM 5827 / CCUG 10774 / NCTC 10582 / VPI-5482 / E50).